The following is a 563-amino-acid chain: Pyruvate decarboxylase isozyme 3 (563 aa).

N-acetylserine is present on serine 2. Residues aspartate 28 and histidine 115 each coordinate pyruvate. A Glycyl lysine isopeptide (Lys-Gly) (interchain with G-Cter in ubiquitin) cross-link involves residue lysine 212. Phosphoserine is present on serine 223. Lysine 233 participates in a covalent cross-link: Glycyl lysine isopeptide (Lys-Gly) (interchain with G-Cter in ubiquitin). Phosphothreonine is present on threonine 266. Residue lysine 269 forms a Glycyl lysine isopeptide (Lys-Gly) (interchain with G-Cter in ubiquitin) linkage. Threonine 353 carries the post-translational modification Phosphothreonine. Thiamine diphosphate is bound by residues threonine 390 and 413–415 (GSI). Aspartate 444 serves as a coordination point for Mg(2+). Residues 445-446 (GS) and 471-476 (NDGYTI) each bind thiamine diphosphate. Positions 471 and 473 each coordinate Mg(2+). Glutamate 477 contributes to the pyruvate binding site. A Glycyl lysine isopeptide (Lys-Gly) (interchain with G-Cter in ubiquitin) cross-link involves residue lysine 505. A Phosphothreonine modification is found at threonine 522.

This sequence belongs to the TPP enzyme family. As to quaternary structure, homotetramer. It depends on Mg(2+) as a cofactor. Thiamine diphosphate is required as a cofactor.

The protein resides in the cytoplasm. The enzyme catalyses pyruvate + H(+) = acetaldehyde + CO2. It catalyses the reaction 3-methyl-2-oxobutanoate + H(+) = 2-methylpropanal + CO2. The catalysed reaction is (S)-3-methyl-2-oxopentanoate + H(+) = 2-methylbutanal + CO2. It carries out the reaction indole-3-pyruvate + H(+) = indole-3-acetaldehyde + CO2. The enzyme catalyses 3-phenylpyruvate + H(+) = 2-phenylacetaldehyde + CO2. It catalyses the reaction 2-oxobutanoate + H(+) = propanal + CO2. The catalysed reaction is 2-oxopentanoate + H(+) = butanal + CO2. It carries out the reaction 2 acetaldehyde = acetoin. The enzyme catalyses acetaldehyde + pyruvate + H(+) = acetoin + CO2. It participates in fermentation; ethanol fermentation. The protein operates within amino-acid degradation; Ehrlich pathway. Functionally, minor of three pyruvate decarboxylases (PDC1, PDC5, PDC6) implicated in the nonoxidative conversion of pyruvate to acetaldehyde and carbon dioxide during alcoholic fermentation. Most of the produced acetaldehyde is subsequently reduced to ethanol, but some is required for cytosolic acetyl-CoA production for biosynthetic pathways. The enzyme is also one of five 2-oxo acid decarboxylases (PDC1, PDC5, PDC6, ARO10, and THI3) able to decarboxylate more complex 2-oxo acids (alpha-keto-acids) than pyruvate, which seem mainly involved in amino acid catabolism. Here the enzyme catalyzes the decarboxylation of amino acids, which, in a first step, have been transaminated to the corresponding 2-oxo acids. In a third step, the resulting aldehydes are reduced to alcohols, collectively referred to as fusel oils or alcohols. Its preferred substrates are the transaminated amino acids derived from threonine (2-oxobutanoate), norvaline (2-oxopentanoate), valine (3-methyl-2-oxobutanoate, also alpha-keto-isovalerate), isoleucine ((3S)-3-methyl-2-oxopentanoate, also alpha-keto-beta-methylvalerate), phenylalanine (phenylpyruvate), and tryptophan (3-(indol-3-yl)pyruvate), whereas transaminated leucine is no substrate. In a side-reaction the carbanionic intermediate (or active aldehyde) generated by decarboxylation or by activation of an aldehyde can react with an aldehyde via condensation (or carboligation) yielding a 2-hydroxy ketone, collectively called acyloins. The expression level of this protein in the presence of fermentable carbon sources is so low that it cannot compensate for the other two pyruvate decarboxylases to sustain fermentation. The sequence is that of Pyruvate decarboxylase isozyme 3 (PDC6) from Saccharomyces cerevisiae (strain ATCC 204508 / S288c) (Baker's yeast).